Reading from the N-terminus, the 365-residue chain is Outer membrane lipoprotein A (365 aa).

A signal peptide spans 1 to 19; sequence MNIATKLMASLVASVVLTA. The interval 19–121 is disordered; the sequence is ACSGGGSSGS…KGEELSKDKS (103 aa). Cysteine 20 carries N-palmitoyl cysteine lipidation. Cysteine 20 carries the S-diacylglycerol cysteine lipid modification. 2 stretches are compositionally biased toward basic and acidic residues: residues 48-68 and 105-121; these read EQPKKEEVPQADNSKAEEPKE and NPQKDAPKGEELSKDKS.

The protein resides in the cell outer membrane. This is Outer membrane lipoprotein A (omlA) from Actinobacillus pleuropneumoniae (Haemophilus pleuropneumoniae).